The sequence spans 263 residues: 3-methyl-2-oxobutanoate hydroxymethyltransferase (263 aa).

2 residues coordinate Mg(2+): D45 and D84. Residues 45-46 (DS), D84, and K112 contribute to the 3-methyl-2-oxobutanoate site. E114 is a Mg(2+) binding site. The Proton acceptor role is filled by E181.

This sequence belongs to the PanB family. Homodecamer; pentamer of dimers. Mg(2+) serves as cofactor.

It is found in the cytoplasm. It carries out the reaction 3-methyl-2-oxobutanoate + (6R)-5,10-methylene-5,6,7,8-tetrahydrofolate + H2O = 2-dehydropantoate + (6S)-5,6,7,8-tetrahydrofolate. Its pathway is cofactor biosynthesis; (R)-pantothenate biosynthesis; (R)-pantoate from 3-methyl-2-oxobutanoate: step 1/2. Functionally, catalyzes the reversible reaction in which hydroxymethyl group from 5,10-methylenetetrahydrofolate is transferred onto alpha-ketoisovalerate to form ketopantoate. This is 3-methyl-2-oxobutanoate hydroxymethyltransferase from Buchnera aphidicola subsp. Schizaphis graminum (strain Sg).